Here is a 238-residue protein sequence, read N- to C-terminus: MERGAPFSHYQLPKSISELNLDQHSNNPTPMTSSVVVAGAGDKNNGIVVQQQPPCVAREQDQYMPIANVIRIMRKTLPSHAKISDDAKETIQECVSEYISFVTGEANERCQREQRKTITAEDILWAMSKLGFDNYVDPLTVFINRYREIETDRGSALRGEPPSLRQTYGGNGIGFHGPSHGLPPPGPYGYGMLDQSMVMGGGRYYQNGSSGQDESSVGGGSSSSINGMPAFDHYGQYK.

A DNA-binding region spans residues 64–70; it reads MPIANVI. The segment at 91–102 is subunit association domain (SAD); the sequence is IQECVSEYISFV. The interval 203–238 is disordered; that stretch reads RYYQNGSSGQDESSVGGGSSSSINGMPAFDHYGQYK. The span at 208-227 shows a compositional bias: low complexity; sequence GSSGQDESSVGGGSSSSING.

The protein belongs to the NFYB/HAP3 subunit family. Heterotrimeric transcription factor composed of three components, NF-YA, NF-YB and NF-YC. NF-YB and NF-YC must interact and dimerize for NF-YA association and DNA binding. Interacts with PRN1. As to expression, expressed in green siliques. Present in etiolated seedlings.

It is found in the nucleus. Component of the NF-Y/HAP transcription factor complex. The NF-Y complex stimulates the transcription of various genes by recognizing and binding to a CCAAT motif in promoters. Acts as a central regulator of the embryogenesis. Required for the speciation of cotyledon identity and the completion of embryo maturation. Controls seed storage protein genes through the regulation of FUS3 and ABI3. Involved in the blue light (BL) and abscisic acid (ABA) signaling pathways. In Arabidopsis thaliana (Mouse-ear cress), this protein is Nuclear transcription factor Y subunit B-9 (NFYB9).